A 483-amino-acid chain; its full sequence is Regulatory protein ViaA (483 aa).

The protein belongs to the ViaA family. Homodimer. Interacts with RavA.

The protein localises to the cytoplasm. In terms of biological role, component of the RavA-ViaA chaperone complex, which may act on the membrane to optimize the function of some of the respiratory chains. ViaA stimulates the ATPase activity of RavA. This Escherichia coli O1:K1 / APEC protein is Regulatory protein ViaA.